A 375-amino-acid chain; its full sequence is Chaperone protein DnaJ (375 aa).

One can recognise a J domain in the interval 5–70 (DYYEVLGVAR…NKRRAYDAHG (66 aa)). The segment at 131-208 (GIERRIEIPT…CHGAGRVEED (78 aa)) adopts a CR-type zinc-finger fold. Zn(2+) is bound by residues cysteine 144, cysteine 147, cysteine 160, cysteine 163, cysteine 182, cysteine 185, cysteine 196, and cysteine 199. CXXCXGXG motif repeat units lie at residues 144–151 (CAPCHGSG), 160–167 (CGTCHGRG), 182–189 (CPHCDGRG), and 196–203 (CKTCHGAG).

The protein belongs to the DnaJ family. In terms of assembly, homodimer. Requires Zn(2+) as cofactor.

It localises to the cytoplasm. Its function is as follows. Participates actively in the response to hyperosmotic and heat shock by preventing the aggregation of stress-denatured proteins and by disaggregating proteins, also in an autonomous, DnaK-independent fashion. Unfolded proteins bind initially to DnaJ; upon interaction with the DnaJ-bound protein, DnaK hydrolyzes its bound ATP, resulting in the formation of a stable complex. GrpE releases ADP from DnaK; ATP binding to DnaK triggers the release of the substrate protein, thus completing the reaction cycle. Several rounds of ATP-dependent interactions between DnaJ, DnaK and GrpE are required for fully efficient folding. Also involved, together with DnaK and GrpE, in the DNA replication of plasmids through activation of initiation proteins. In Xanthomonas euvesicatoria pv. vesicatoria (strain 85-10) (Xanthomonas campestris pv. vesicatoria), this protein is Chaperone protein DnaJ.